A 256-amino-acid chain; its full sequence is Thiazole synthase (256 aa).

The active-site Schiff-base intermediate with DXP is Lys96. 1-deoxy-D-xylulose 5-phosphate contacts are provided by residues Gly157, 184–185, and 206–207; these read AG and NT.

It belongs to the ThiG family. In terms of assembly, homotetramer. Forms heterodimers with either ThiH or ThiS.

The protein resides in the cytoplasm. The catalysed reaction is [ThiS sulfur-carrier protein]-C-terminal-Gly-aminoethanethioate + 2-iminoacetate + 1-deoxy-D-xylulose 5-phosphate = [ThiS sulfur-carrier protein]-C-terminal Gly-Gly + 2-[(2R,5Z)-2-carboxy-4-methylthiazol-5(2H)-ylidene]ethyl phosphate + 2 H2O + H(+). It participates in cofactor biosynthesis; thiamine diphosphate biosynthesis. In terms of biological role, catalyzes the rearrangement of 1-deoxy-D-xylulose 5-phosphate (DXP) to produce the thiazole phosphate moiety of thiamine. Sulfur is provided by the thiocarboxylate moiety of the carrier protein ThiS. In vitro, sulfur can be provided by H(2)S. The chain is Thiazole synthase from Roseobacter denitrificans (strain ATCC 33942 / OCh 114) (Erythrobacter sp. (strain OCh 114)).